Here is a 263-residue protein sequence, read N- to C-terminus: Serine protease ami (263 aa).

The signal sequence occupies residues 1-21; the sequence is MNISRVLFAVVLVLTVSTYEC. N-linked (GlcNAc...) asparagine glycosylation occurs at N2. Positions 22–26 are cleaved as a propeptide — activation peptide; it reads RPRGR. In terms of domain architecture, Peptidase S1 spans 27–254; that stretch reads ILGGQDSKEK…YKSWIMETMY (228 aa). C52 and C68 are oxidised to a cystine. Catalysis depends on H67, which acts as the Charge relay system. N73, N74, and N108 each carry an N-linked (GlcNAc...) asparagine glycan. D115 (charge relay system) is an active-site residue. 3 disulfide bridges follow: C149–C215, C180–C196, and C205–C230. Catalysis depends on S209, which acts as the Charge relay system. Residue N255 is glycosylated (N-linked (GlcNAc...) asparagine).

This sequence belongs to the peptidase S1 family. As to expression, in the embryo, localizes to paraxial regions at the neurula stage and anterior ventral regions at the tailbud stage. From the late tailbud to tadpole stage, expressed along the forming blood vessels including the anterior cardinal veins, posterior cardinal veins, intersomitic veins, dorsal longitudinal anastomosing vessel, dorsal aorta, pronephric sinus and most prominently around the vascular vitelline network, where expression shows left-right asymmetry in the stage 42 embryo. Localizes to endothelial cells. In adults, shows highest expression in liver with moderate levels of expression in the fat body, lung, gut and vessels. Weakly expressed in adult heart, muscle, testis and ovary.

Its subcellular location is the secreted. Functionally, probable serine protease. The chain is Serine protease ami from Xenopus laevis (African clawed frog).